Consider the following 437-residue polypeptide: GTPase Der (437 aa).

2 consecutive EngA-type G domains span residues 4-167 and 176-351; these read PVIA…PEDE and IRIS…ENHN. Residues 10-17, 57-61, 119-122, 182-189, 229-233, and 294-297 each bind GTP; these read GRPNVGKS, DTGGI, NKID, DTAGM, and NKWD. One can recognise a KH-like domain in the interval 352 to 436; the sequence is LRVPTHVLND…PIKIIARKKN (85 aa).

Belongs to the TRAFAC class TrmE-Era-EngA-EngB-Septin-like GTPase superfamily. EngA (Der) GTPase family. Associates with the 50S ribosomal subunit.

Functionally, GTPase that plays an essential role in the late steps of ribosome biogenesis. This Halalkalibacterium halodurans (strain ATCC BAA-125 / DSM 18197 / FERM 7344 / JCM 9153 / C-125) (Bacillus halodurans) protein is GTPase Der.